The primary structure comprises 232 residues: YlmG homolog protein 1-1, chloroplastic (232 aa).

A chloroplast-targeting transit peptide spans 1–16 (MAAITALTLRSPVYLP). The next 2 helical transmembrane spans lie at 147 to 167 (LTVV…VLMV) and 201 to 221 (IIPP…AVLG).

This sequence belongs to the YggT family.

Its subcellular location is the plastid. The protein localises to the chloroplast thylakoid membrane. Its function is as follows. Required for the proper distribution of nucleoids in chloroplasts. The nucleoid partitioning by YLMG1-1 may be related to chloroplast division processes. This is YlmG homolog protein 1-1, chloroplastic from Arabidopsis thaliana (Mouse-ear cress).